The following is a 157-amino-acid chain: Crossover junction endodeoxyribonuclease RuvC (157 aa).

Residues Asp7, Glu67, and Asp140 contribute to the active site. Residues Asp7, Glu67, and Asp140 each contribute to the Mg(2+) site.

This sequence belongs to the RuvC family. In terms of assembly, homodimer which binds Holliday junction (HJ) DNA. The HJ becomes 2-fold symmetrical on binding to RuvC with unstacked arms; it has a different conformation from HJ DNA in complex with RuvA. In the full resolvosome a probable DNA-RuvA(4)-RuvB(12)-RuvC(2) complex forms which resolves the HJ. Requires Mg(2+) as cofactor.

It is found in the cytoplasm. It carries out the reaction Endonucleolytic cleavage at a junction such as a reciprocal single-stranded crossover between two homologous DNA duplexes (Holliday junction).. The RuvA-RuvB-RuvC complex processes Holliday junction (HJ) DNA during genetic recombination and DNA repair. Endonuclease that resolves HJ intermediates. Cleaves cruciform DNA by making single-stranded nicks across the HJ at symmetrical positions within the homologous arms, yielding a 5'-phosphate and a 3'-hydroxyl group; requires a central core of homology in the junction. The consensus cleavage sequence is 5'-(A/T)TT(C/G)-3'. Cleavage occurs on the 3'-side of the TT dinucleotide at the point of strand exchange. HJ branch migration catalyzed by RuvA-RuvB allows RuvC to scan DNA until it finds its consensus sequence, where it cleaves and resolves the cruciform DNA. The sequence is that of Crossover junction endodeoxyribonuclease RuvC from Rickettsia bellii (strain RML369-C).